Reading from the N-terminus, the 694-residue chain is MLEIEALYVPLSKLRNIGIMAHIDAGKTTTTERILYYTGRKHVLGSVDEGTATMDWMEQEKERGITIKAAATTCFWKEHRINIIDTPGHVDFTVEVERALRVLDGAVAVFDATAGVEPQSETVWRQAERYSVPRIAFMNKMDKTGADFFMSIKSMVEKLHAKPVAIQVPIGAEKDFIGVVDLIEMKAITWTSEDGSEFIKHEIPENMLDLAEEMREEMISMLAEEDEELLELYLEEQELPVEKIKDILRKATINNKLVPVLCGAAARNKGIQPLLDAVVDYLPSPIDIPAVKAITPSGEEIQIPPSVEGDFAGLAFKIQTDPYVGKLAYVRVYSGKLEKGSYVYNSTKQIRERVARLIFMHADKREDAEYARAGDIVAIIGLKNTTTGDTLCSQERPVLLEKMSFPEPVISIAIEPLTRDDEERMVKAVAALSEEDPTLRINVDRETGQVVLSGMGELHLEIVTDRLKREFGVNVRVGRPQVSYRETIRQTGTAEGKYVRQTGGRGQYGHVIMKFEPLPLDGEKQFEFINKTVGGVIPREYIPAIEEGVKEAMEMGVLAGYPMIGVRAVLLDGSYHEVDSSEIAFKVAASLAFKNAMKICQPVLLEPVMKLEVVVPEEYVGGIIADLNARRAQIESLESRINLRVIKAFVPLSELFGYATTLRSLSQGRAVHVAQFSHYKEAPDKVVEKVLKVV.

One can recognise a tr-type G domain in the interval 12-286 (SKLRNIGIMA…AVVDYLPSPI (275 aa)). GTP-binding positions include 21-28 (AHIDAGKT), 85-89 (DTPGH), and 139-142 (NKMD).

This sequence belongs to the TRAFAC class translation factor GTPase superfamily. Classic translation factor GTPase family. EF-G/EF-2 subfamily.

It is found in the cytoplasm. Functionally, catalyzes the GTP-dependent ribosomal translocation step during translation elongation. During this step, the ribosome changes from the pre-translocational (PRE) to the post-translocational (POST) state as the newly formed A-site-bound peptidyl-tRNA and P-site-bound deacylated tRNA move to the P and E sites, respectively. Catalyzes the coordinated movement of the two tRNA molecules, the mRNA and conformational changes in the ribosome. The chain is Elongation factor G from Pseudothermotoga lettingae (strain ATCC BAA-301 / DSM 14385 / NBRC 107922 / TMO) (Thermotoga lettingae).